The primary structure comprises 320 residues: Cytochrome f (320 aa).

The signal sequence occupies residues 1–35 (MQTRNTLSWIKEEITRSISVSLMIYIITWASISNA). 4 residues coordinate heme: Tyr-36, Cys-56, Cys-59, and His-60. The chain crosses the membrane as a helical span at residues 286–306 (VQGLLFFLASVVLAQIFLVLK).

The protein belongs to the cytochrome f family. The 4 large subunits of the cytochrome b6-f complex are cytochrome b6, subunit IV (17 kDa polypeptide, petD), cytochrome f and the Rieske protein, while the 4 small subunits are PetG, PetL, PetM and PetN. The complex functions as a dimer. Requires heme as cofactor.

The protein resides in the plastid. It is found in the chloroplast thylakoid membrane. In terms of biological role, component of the cytochrome b6-f complex, which mediates electron transfer between photosystem II (PSII) and photosystem I (PSI), cyclic electron flow around PSI, and state transitions. This chain is Cytochrome f, found in Carica papaya (Papaya).